The sequence spans 603 residues: DNA mismatch repair protein MutL (603 aa).

This sequence belongs to the DNA mismatch repair MutL/HexB family.

This protein is involved in the repair of mismatches in DNA. It is required for dam-dependent methyl-directed DNA mismatch repair. May act as a 'molecular matchmaker', a protein that promotes the formation of a stable complex between two or more DNA-binding proteins in an ATP-dependent manner without itself being part of a final effector complex. The protein is DNA mismatch repair protein MutL of Sphingopyxis alaskensis (strain DSM 13593 / LMG 18877 / RB2256) (Sphingomonas alaskensis).